The chain runs to 231 residues: MAGLVDFKNEEEVKDYLDNLGTEYSYQCFKEKQPDGCNRLAEYFENIKKNFESAAGILKINCDQNEHSESFYKLGAYYVTGKGGLPVDLKAAYSCFLKSCNKGGKKSIDSCHNVGLLAHDGRVNDEKADAVTARDYYNKACDGNFAASCFNLSATYLQGAPGIPKDMNKALHFSEKACSLGHVWGCANASRMYKLGDGVAKNDEKAESLKNRARDLHKMQQERTPQISFGE.

Sel1-like repeat units lie at residues 34–66, 68–104, 108–145, 146–182, and 183–218; these read PDGCNRLAEYFENIKKNFESAAGILKINCDQNE, SESFYKLGAYYVTGKGGLPVDLKAAYSCFLKSCNKGG, IDSCHNVGLLAHDGRVNDEKADAVTARDYYNKACDGNF, AASCFNLSATYLQGAPGIPKDMNKALHFSEKACSLGH, and VWGCANASRMYKLGDGVAKNDEKAESLKNRARDLHK.

Belongs to the hcp beta-lactamase family.

It localises to the mitochondrion intermembrane space. In terms of biological role, may be required for assembly of mitochondrial respiratory chain complexes. The polypeptide is Cytochrome c oxidase assembly factor 7A (coa7-a) (Xenopus laevis (African clawed frog)).